A 579-amino-acid chain; its full sequence is Effector protein HopAB3 (579 aa).

Disordered stretches follow at residues 1-140 (MAGI…TGAV), 214-294 (VRQQ…NQVP), and 384-408 (PARA…PDSA). The host recognition; Pto interaction stretch occupies residues 1–336 (MAGINGAGPS…LRAALERHIL (336 aa)). Composition is skewed to low complexity over residues 23 to 39 (ASGG…SSNS), 89 to 101 (RPQE…APQA), 219 to 248 (ASAP…ESSS), 266 to 281 (NQRR…ASQR), and 384 to 402 (PARA…ATVS). The segment at 337–579 (HRRPIPMDIA…IAKYAFRIVP (243 aa)) is E3 ubiquitin-protein ligase.

This sequence belongs to the HopAB family. As to quaternary structure, interacts physically with plant cell Pto. In terms of processing, auto-ubiquitinated.

It is found in the secreted. Effector protein involved in gene-for-gene resistance in tomato plants. It is recognized by the host Pto resistance protein and elicits Pto and Prf-dependent hypersensitive response (HR) and programmed cell death (PCD), resulting in host immunity. In susceptible plants, acts as a virulence factor by suppressing PCD and HR-based plant immunity. This function requires its E3 ubiquitin ligase activity probably by recruiting E2 enzymes and transferring ubiquitin molecules to cellular proteins involved in regulation of PCD and targeting them for degradation. Enhances the development of disease symptoms and bacterial growth. This Pseudomonas syringae pv. tomato protein is Effector protein HopAB3 (hopAB3).